Here is a 324-residue protein sequence, read N- to C-terminus: GTPase Era (324 aa).

Residues 31-199 (KSGFIGIIGR…QELLVEHLEH (169 aa)) form the Era-type G domain. Positions 39–46 (GRPNVGKS) are G1. A GTP-binding site is contributed by 39-46 (GRPNVGKS). The G2 stretch occupies residues 65–69 (QTTRN). The segment at 86–89 (DTPG) is G3. GTP contacts are provided by residues 86–90 (DTPGI) and 148–151 (NKVD). The G4 stretch occupies residues 148–151 (NKVD). Residues 178–180 (FSA) are G5. The KH type-2 domain occupies 230–306 (TREEVPHSVA…YLELFVKVQP (77 aa)).

This sequence belongs to the TRAFAC class TrmE-Era-EngA-EngB-Septin-like GTPase superfamily. Era GTPase family. As to quaternary structure, monomer.

It localises to the cytoplasm. The protein localises to the cell inner membrane. Functionally, an essential GTPase that binds both GDP and GTP, with rapid nucleotide exchange. Plays a role in 16S rRNA processing and 30S ribosomal subunit biogenesis and possibly also in cell cycle regulation and energy metabolism. The polypeptide is GTPase Era (Nostoc sp. (strain PCC 7120 / SAG 25.82 / UTEX 2576)).